The chain runs to 118 residues: Large ribosomal subunit protein uL18 (118 aa).

This sequence belongs to the universal ribosomal protein uL18 family. Part of the 50S ribosomal subunit; part of the 5S rRNA/L5/L18/L25 subcomplex. Contacts the 5S and 23S rRNAs.

Its function is as follows. This is one of the proteins that bind and probably mediate the attachment of the 5S RNA into the large ribosomal subunit, where it forms part of the central protuberance. The chain is Large ribosomal subunit protein uL18 from Wolinella succinogenes (strain ATCC 29543 / DSM 1740 / CCUG 13145 / JCM 31913 / LMG 7466 / NCTC 11488 / FDC 602W) (Vibrio succinogenes).